Consider the following 189-residue polypeptide: Isopentenyl-diphosphate Delta-isomerase 2 (189 aa).

Mn(2+) is bound by residues His-24 and His-30. Residues 28 to 160 (ALHRAISIFV…PETYSFWLAA (133 aa)) enclose the Nudix hydrolase domain. Residue Cys-65 is part of the active site. Residue Cys-65 coordinates Mg(2+). His-67 contributes to the Mn(2+) binding site. Glu-85 contributes to the Mg(2+) binding site. Positions 110 and 112 each coordinate Mn(2+). Residue Glu-112 is part of the active site.

This sequence belongs to the IPP isomerase type 1 family. The cofactor is Mg(2+). Mn(2+) is required as a cofactor.

Its subcellular location is the cytoplasm. The enzyme catalyses isopentenyl diphosphate = dimethylallyl diphosphate. It participates in isoprenoid biosynthesis; dimethylallyl diphosphate biosynthesis; dimethylallyl diphosphate from isopentenyl diphosphate: step 1/1. Functionally, catalyzes the 1,3-allylic rearrangement of the homoallylic substrate isopentenyl (IPP) to its highly electrophilic allylic isomer, dimethylallyl diphosphate (DMAPP). The protein is Isopentenyl-diphosphate Delta-isomerase 2 of Aromatoleum aromaticum (strain DSM 19018 / LMG 30748 / EbN1) (Azoarcus sp. (strain EbN1)).